The primary structure comprises 98 residues: Small ribosomal subunit protein uS17 (98 aa).

Belongs to the universal ribosomal protein uS17 family. In terms of assembly, part of the 30S ribosomal subunit.

Functionally, one of the primary rRNA binding proteins, it binds specifically to the 5'-end of 16S ribosomal RNA. This is Small ribosomal subunit protein uS17 from Mesomycoplasma hyopneumoniae (strain 232) (Mycoplasma hyopneumoniae).